We begin with the raw amino-acid sequence, 361 residues long: Tetrathionate reductase subunit C (361 aa).

A run of 9 helical transmembrane segments spans residues 26-46, 53-73, 104-124, 160-180, 193-213, 233-253, 258-278, 288-308, and 334-354; these read FSYA…LALL, AIPM…LGPL, ALYG…FALL, LAAI…MLFF, LMLP…ALIL, GAAA…WGMW, FAAV…TFIL, ITPI…WNLI, and AVSP…IFPM.

Belongs to the NrfD family. As to quaternary structure, probably composed of three subunits: TtrA, TtrB and TtrC.

The protein localises to the cell membrane. Functionally, part of a membrane-bound tetrathionate reductase that catalyzes the reduction of tetrathionate to thiosulfate. TtrC probably anchors TtrA and TtrB to the external face of the cytoplasmic membrane. May transfer electrons from membrane quinol to TtrB. This is Tetrathionate reductase subunit C (ttrC) from Archaeoglobus fulgidus (strain ATCC 49558 / DSM 4304 / JCM 9628 / NBRC 100126 / VC-16).